Reading from the N-terminus, the 199-residue chain is Small ribosomal subunit protein mS38 (199 aa).

Belongs to the mitochondrion-specific ribosomal protein mS38 family. Component of the mitochondrial small ribosomal subunit (mt-SSU). Mature mammalian 55S mitochondrial ribosomes consist of a small (28S) and a large (39S) subunit. The 28S small subunit contains a 12S ribosomal RNA (12S mt-rRNA) and 30 different proteins. The 39S large subunit contains a 16S rRNA (16S mt-rRNA), a copy of mitochondrial valine transfer RNA (mt-tRNA(Val)), which plays an integral structural role, and 52 different proteins. Interacts with Aurora-A. In terms of tissue distribution, ubiquitously expressed and especially highly expressed in heart, skeletal muscle and testis.

It localises to the mitochondrion matrix. Its subcellular location is the nucleus. In terms of biological role, may act as a negative regulator of Aurora-A kinase, by down-regulation through proteasome-dependent degradation. The sequence is that of Small ribosomal subunit protein mS38 (AURKAIP1) from Homo sapiens (Human).